Here is a 513-residue protein sequence, read N- to C-terminus: ATP synthase subunit alpha (513 aa).

An ATP-binding site is contributed by 169–176 (GDRQTGKT).

It belongs to the ATPase alpha/beta chains family. In terms of assembly, F-type ATPases have 2 components, CF(1) - the catalytic core - and CF(0) - the membrane proton channel. CF(1) has five subunits: alpha(3), beta(3), gamma(1), delta(1), epsilon(1). CF(0) has three main subunits: a(1), b(2) and c(9-12). The alpha and beta chains form an alternating ring which encloses part of the gamma chain. CF(1) is attached to CF(0) by a central stalk formed by the gamma and epsilon chains, while a peripheral stalk is formed by the delta and b chains.

The protein resides in the cell inner membrane. It catalyses the reaction ATP + H2O + 4 H(+)(in) = ADP + phosphate + 5 H(+)(out). Its function is as follows. Produces ATP from ADP in the presence of a proton gradient across the membrane. The alpha chain is a regulatory subunit. The protein is ATP synthase subunit alpha of Hydrogenovibrio crunogenus (strain DSM 25203 / XCL-2) (Thiomicrospira crunogena).